The chain runs to 2256 residues: GON-4-like protein (2256 aa).

3 disordered regions span residues 1–56, 105–213, and 227–266; these read MLPC…DSAG, PSLE…SLGP, and LFIP…MTYD. Over residues 23–35 the composition is skewed to basic and acidic residues; that stretch reads EDLHLEAAVKPDT. The span at 40–53 shows a compositional bias: polar residues; it reads DCTSESLSWGQSHD. A compositionally biased stretch (basic and acidic residues) spans 141–176; that stretch reads TREDGGDHTVPEEPPSGEHAEEVKAEGGELEMHSEG. The segment covering 242–254 has biased composition (basic residues); it reads RKKTKKGTKRKRD. At S346 the chain carries Phosphoserine. Over residues 366–395 the composition is skewed to acidic residues; the sequence is EDDDSSDEEYQPDEEEEDETAEESLLESDV. Disordered stretches follow at residues 366–428, 441–460, and 545–573; these read EDDD…VLSE, SAEV…QTRD, and DVEN…DTED. A compositionally biased stretch (acidic residues) spans 545–571; the sequence is DVENEDEADDDDDPEYNFLEDLDEPDT. Positions 609 to 1363 are required for interaction with YY1, SIN3A and HDAC1, and transcriptional repression activity; it reads EMGFSNMEDD…DCMEEISSDF (755 aa). Residue S783 is modified to Phosphoserine. 2 stretches are compositionally biased toward low complexity: residues 947–959 and 1094–1115; these read TAGG…TETS and PWSE…LPSL. Disordered regions lie at residues 947-969, 1078-1141, 1241-1288, and 1360-1620; these read TAGG…KTSP, AALP…SPCV, AEGK…EAVS, and SSDF…SRAR. Positions 1119–1135 are enriched in basic residues; sequence KFRKPYVRRKPTRRKGA. The span at 1364–1386 shows a compositional bias: basic and acidic residues; the sequence is PKQDIGEEVKEECCMELDRDSPQ. Composition is skewed to polar residues over residues 1387-1401 and 1429-1444; these read EKAS…QTAT and LPQS…TVLN. S1445 bears the Phosphoserine mark. The segment covering 1475–1495 has biased composition (acidic residues); it reads GAEEEEEEDFDDLTQDEEDEL. Positions 1496 to 1510 are enriched in low complexity; that stretch reads SSASEESVLSVPELQ. Acidic residues predominate over residues 1529–1553; that stretch reads GESEEENSQEENSEPEEEEEEEAEG. A compositionally biased stretch (basic residues) spans 1606–1620; that stretch reads RSSHRARSRRGSRAR. PAH domains are found at residues 1644-1716 and 1726-1797; these read EQKD…LLPE and EQQA…FDHL. Disordered regions lie at residues 1831–1886 and 1909–1966; these read VEEE…LKKS and LELV…APIP. A compositionally biased stretch (basic and acidic residues) spans 1851 to 1868; sequence EIGVQHQDKESEWPEAAK. S1921 and S1994 each carry phosphoserine. Disordered regions lie at residues 2050 to 2078 and 2110 to 2148; these read PETS…STRD and IRGT…VLPK. Residues 2111-2129 show a composition bias toward low complexity; that stretch reads RGTSSGASASEAAPTASRE. The 54-residue stretch at 2163–2216 folds into the Myb-like domain; the sequence is STGEKVVLWTREADRVILTMCQEQGAQPHTFSVISQQLGNKTPVEVSHRFRELM. A disordered region spans residues 2223–2256; sequence CEASSEDEDDATSTSNADQLSDHGDLLSEEELDE.

As to quaternary structure, found in a complex with YY1, SIN3A and HDAC1.

Its subcellular location is the nucleus. In terms of biological role, has transcriptional repressor activity, probably as part of a complex with YY1, SIN3A and HDAC1. Required for B cell lymphopoiesis. This chain is GON-4-like protein (Gon4l), found in Rattus norvegicus (Rat).